Here is a 730-residue protein sequence, read N- to C-terminus: 1,4-alpha-glucan branching enzyme GlgB (730 aa).

D405 serves as the catalytic Nucleophile. E458 acts as the Proton donor in catalysis.

The protein belongs to the glycosyl hydrolase 13 family. GlgB subfamily. As to quaternary structure, monomer.

It carries out the reaction Transfers a segment of a (1-&gt;4)-alpha-D-glucan chain to a primary hydroxy group in a similar glucan chain.. Its pathway is glycan biosynthesis; glycogen biosynthesis. Its function is as follows. Catalyzes the formation of the alpha-1,6-glucosidic linkages in glycogen by scission of a 1,4-alpha-linked oligosaccharide from growing alpha-1,4-glucan chains and the subsequent attachment of the oligosaccharide to the alpha-1,6 position. This is 1,4-alpha-glucan branching enzyme GlgB (glgB) from Haemophilus influenzae (strain ATCC 51907 / DSM 11121 / KW20 / Rd).